Here is a 392-residue protein sequence, read N- to C-terminus: MLLSLAQWLQTISPELGFLRVFQYLTFRALMAAMTALLIGLLAGPFVIRRLISLKIGQPIREYAMQTHLSKSGTPTMGGVLILLAIGISTLLWFDLSNRFVWIVLLVTLGFGAIGWVDDWRKVVLKDPEGMRSREKYLWQSVVGLIAALYLVFSISESSNLRVLELFMNWVRSGLDVNLPPKAGLLVPFMKEISYPLGVFGFVILTYLVIVGSSNAVNLTDGLDGLAIMPVVMVGSSLGVFAYVTGSSVYSKYLLFPHIPGSGELLIFCAAMAGSGLAFLWFNTHPAQVFMGDVGALALGAALGTIAVIVRQEIVLAIMGGIFVVEALSVMLQVTWFKYTKRRYGQGRRLFQMAPLHHHFEKCGWKETQVVVRFWIITMLLCLVGLSTLKLR.

The next 10 helical transmembrane spans lie at 28-48 (RALMAAMTALLIGLLAGPFVI), 76-96 (TMGGVLILLAIGISTLLWFDL), 100-120 (FVWIVLLVTLGFGAIGWVDDW), 137-157 (YLWQSVVGLIAALYLVFSISE), 193-213 (ISYPLGVFGFVILTYLVIVGS), 225-245 (GLAIMPVVMVGSSLGVFAYVT), 262-282 (SGELLIFCAAMAGSGLAFLWF), 289-309 (VFMGDVGALALGAALGTIAVI), 314-334 (IVLAIMGGIFVVEALSVMLQV), and 369-389 (QVVVRFWIITMLLCLVGLSTL).

The protein belongs to the glycosyltransferase 4 family. MraY subfamily. Mg(2+) serves as cofactor.

The protein localises to the cell inner membrane. The catalysed reaction is UDP-N-acetyl-alpha-D-muramoyl-L-alanyl-gamma-D-glutamyl-meso-2,6-diaminopimeloyl-D-alanyl-D-alanine + di-trans,octa-cis-undecaprenyl phosphate = di-trans,octa-cis-undecaprenyl diphospho-N-acetyl-alpha-D-muramoyl-L-alanyl-D-glutamyl-meso-2,6-diaminopimeloyl-D-alanyl-D-alanine + UMP. It functions in the pathway cell wall biogenesis; peptidoglycan biosynthesis. Functionally, catalyzes the initial step of the lipid cycle reactions in the biosynthesis of the cell wall peptidoglycan: transfers peptidoglycan precursor phospho-MurNAc-pentapeptide from UDP-MurNAc-pentapeptide onto the lipid carrier undecaprenyl phosphate, yielding undecaprenyl-pyrophosphoryl-MurNAc-pentapeptide, known as lipid I. The polypeptide is Phospho-N-acetylmuramoyl-pentapeptide-transferase (Polaromonas naphthalenivorans (strain CJ2)).